We begin with the raw amino-acid sequence, 118 residues long: UPF0102 protein CHY_1414 (118 aa).

This sequence belongs to the UPF0102 family.

The polypeptide is UPF0102 protein CHY_1414 (Carboxydothermus hydrogenoformans (strain ATCC BAA-161 / DSM 6008 / Z-2901)).